Consider the following 487-residue polypeptide: Malonate-semialdehyde dehydrogenase 2 (487 aa).

F154, K178, E181, R182, and S231 together coordinate NAD(+). The active-site Nucleophile is C286. E386 contributes to the NAD(+) binding site.

Belongs to the aldehyde dehydrogenase family. IolA subfamily. In terms of assembly, homotetramer.

The enzyme catalyses 3-oxopropanoate + NAD(+) + CoA + H2O = hydrogencarbonate + acetyl-CoA + NADH + H(+). The catalysed reaction is 2-methyl-3-oxopropanoate + NAD(+) + CoA + H2O = propanoyl-CoA + hydrogencarbonate + NADH + H(+). The protein operates within polyol metabolism; myo-inositol degradation into acetyl-CoA; acetyl-CoA from myo-inositol: step 7/7. Functionally, catalyzes the oxidation of malonate semialdehyde (MSA) and methylmalonate semialdehyde (MMSA) into acetyl-CoA and propanoyl-CoA, respectively. Is involved in a myo-inositol catabolic pathway. Bicarbonate, and not CO2, is the end-product of the enzymatic reaction. The polypeptide is Malonate-semialdehyde dehydrogenase 2 (Bacillus anthracis).